The primary structure comprises 157 residues: 2-C-methyl-D-erythritol 2,4-cyclodiphosphate synthase (157 aa).

Residues Asp-8 and His-10 each contribute to the a divalent metal cation site. 4-CDP-2-C-methyl-D-erythritol 2-phosphate is bound by residues 8–10 (DVH) and 34–35 (HS). Position 42 (His-42) interacts with a divalent metal cation. 4-CDP-2-C-methyl-D-erythritol 2-phosphate contacts are provided by residues 56-58 (DIG), 132-135 (TTNE), and Arg-142.

It belongs to the IspF family. As to quaternary structure, homotrimer. A divalent metal cation serves as cofactor.

The catalysed reaction is 4-CDP-2-C-methyl-D-erythritol 2-phosphate = 2-C-methyl-D-erythritol 2,4-cyclic diphosphate + CMP. Its pathway is isoprenoid biosynthesis; isopentenyl diphosphate biosynthesis via DXP pathway; isopentenyl diphosphate from 1-deoxy-D-xylulose 5-phosphate: step 4/6. In terms of biological role, involved in the biosynthesis of isopentenyl diphosphate (IPP) and dimethylallyl diphosphate (DMAPP), two major building blocks of isoprenoid compounds. Catalyzes the conversion of 4-diphosphocytidyl-2-C-methyl-D-erythritol 2-phosphate (CDP-ME2P) to 2-C-methyl-D-erythritol 2,4-cyclodiphosphate (ME-CPP) with a corresponding release of cytidine 5-monophosphate (CMP). In Chlorobium luteolum (strain DSM 273 / BCRC 81028 / 2530) (Pelodictyon luteolum), this protein is 2-C-methyl-D-erythritol 2,4-cyclodiphosphate synthase.